The chain runs to 150 residues: D-aminoacyl-tRNA deacylase (150 aa).

The short motif at 138–139 (GP) is the Gly-cisPro motif, important for rejection of L-amino acids element.

It belongs to the DTD family. In terms of assembly, homodimer.

It is found in the cytoplasm. The enzyme catalyses glycyl-tRNA(Ala) + H2O = tRNA(Ala) + glycine + H(+). It catalyses the reaction a D-aminoacyl-tRNA + H2O = a tRNA + a D-alpha-amino acid + H(+). An aminoacyl-tRNA editing enzyme that deacylates mischarged D-aminoacyl-tRNAs. Also deacylates mischarged glycyl-tRNA(Ala), protecting cells against glycine mischarging by AlaRS. Acts via tRNA-based rather than protein-based catalysis; rejects L-amino acids rather than detecting D-amino acids in the active site. By recycling D-aminoacyl-tRNA to D-amino acids and free tRNA molecules, this enzyme counteracts the toxicity associated with the formation of D-aminoacyl-tRNA entities in vivo and helps enforce protein L-homochirality. This Bacteroides thetaiotaomicron (strain ATCC 29148 / DSM 2079 / JCM 5827 / CCUG 10774 / NCTC 10582 / VPI-5482 / E50) protein is D-aminoacyl-tRNA deacylase.